Consider the following 150-residue polypeptide: Ribonuclease pancreatic (150 aa).

The first 26 residues, 1–26, serve as a signal peptide directing secretion; the sequence is MALKSLVLLSLLVLVLLLVRVQPSLG. N-linked (Glc) (glycation) lysine; in vitro glycans are attached at residues lysine 27 and lysine 33. Substrate contacts are provided by lysine 33 and arginine 36. The active-site Proton acceptor is the histidine 38. 4 disulfides stabilise this stretch: cysteine 52/cysteine 110, cysteine 66/cysteine 121, cysteine 84/cysteine 136, and cysteine 91/cysteine 98. Asparagine 60 carries an N-linked (GlcNAc...) asparagine; partial glycan. N-linked (Glc) (glycation) lysine; in vitro glycosylation is found at lysine 63 and lysine 67. Substrate is bound by residues 67–71, lysine 92, and arginine 111; that span reads KPVNT. The active-site Proton donor is histidine 145.

The protein belongs to the pancreatic ribonuclease family. As to quaternary structure, interacts with and forms tight 1:1 complexes with RNH1. Dimerization of two such complexes may occur. Interaction with RNH1 inhibits this protein. Monomer. In terms of tissue distribution, pancreas.

It localises to the secreted. It catalyses the reaction an [RNA] containing cytidine + H2O = an [RNA]-3'-cytidine-3'-phosphate + a 5'-hydroxy-ribonucleotide-3'-[RNA].. The catalysed reaction is an [RNA] containing uridine + H2O = an [RNA]-3'-uridine-3'-phosphate + a 5'-hydroxy-ribonucleotide-3'-[RNA].. Endonuclease that catalyzes the cleavage of RNA on the 3' side of pyrimidine nucleotides. Acts on single-stranded and double-stranded RNA. This Bos taurus (Bovine) protein is Ribonuclease pancreatic (RNASE1).